Reading from the N-terminus, the 340-residue chain is 4-hydroxy-3-methylbut-2-enyl diphosphate reductase (340 aa).

Cys21 lines the [4Fe-4S] cluster pocket. 2 residues coordinate (2E)-4-hydroxy-3-methylbut-2-enyl diphosphate: His50 and His83. Dimethylallyl diphosphate contacts are provided by His50 and His83. Isopentenyl diphosphate is bound by residues His50 and His83. Cys105 contacts [4Fe-4S] cluster. His133 lines the (2E)-4-hydroxy-3-methylbut-2-enyl diphosphate pocket. His133 contributes to the dimethylallyl diphosphate binding site. Residue His133 participates in isopentenyl diphosphate binding. Catalysis depends on Glu135, which acts as the Proton donor. Thr173 serves as a coordination point for (2E)-4-hydroxy-3-methylbut-2-enyl diphosphate. [4Fe-4S] cluster is bound at residue Cys203. (2E)-4-hydroxy-3-methylbut-2-enyl diphosphate is bound by residues Ser231, Ser232, Asn233, and Ser276. Residues Ser231, Ser232, Asn233, and Ser276 each contribute to the dimethylallyl diphosphate site. Residues Ser231, Ser232, Asn233, and Ser276 each coordinate isopentenyl diphosphate. Residues 320–340 (KARGEPLTRSATAGDRMNADR) form a disordered region.

This sequence belongs to the IspH family. [4Fe-4S] cluster serves as cofactor.

The enzyme catalyses isopentenyl diphosphate + 2 oxidized [2Fe-2S]-[ferredoxin] + H2O = (2E)-4-hydroxy-3-methylbut-2-enyl diphosphate + 2 reduced [2Fe-2S]-[ferredoxin] + 2 H(+). It catalyses the reaction dimethylallyl diphosphate + 2 oxidized [2Fe-2S]-[ferredoxin] + H2O = (2E)-4-hydroxy-3-methylbut-2-enyl diphosphate + 2 reduced [2Fe-2S]-[ferredoxin] + 2 H(+). Its pathway is isoprenoid biosynthesis; dimethylallyl diphosphate biosynthesis; dimethylallyl diphosphate from (2E)-4-hydroxy-3-methylbutenyl diphosphate: step 1/1. It participates in isoprenoid biosynthesis; isopentenyl diphosphate biosynthesis via DXP pathway; isopentenyl diphosphate from 1-deoxy-D-xylulose 5-phosphate: step 6/6. Functionally, catalyzes the conversion of 1-hydroxy-2-methyl-2-(E)-butenyl 4-diphosphate (HMBPP) into a mixture of isopentenyl diphosphate (IPP) and dimethylallyl diphosphate (DMAPP). Acts in the terminal step of the DOXP/MEP pathway for isoprenoid precursor biosynthesis. The sequence is that of 4-hydroxy-3-methylbut-2-enyl diphosphate reductase from Acidothermus cellulolyticus (strain ATCC 43068 / DSM 8971 / 11B).